The chain runs to 261 residues: uncharacterized protein (261 aa).

The segment at 1 to 22 (MAETTEPPSDAGTSQADAMALA) is disordered. Residues 107–127 (IAMAAAVVIICGFTGLSGYIV) traverse the membrane as a helical segment.

The protein to M.tuberculosis Rv1362c.

The protein localises to the membrane. This is an uncharacterized protein from Mycobacterium tuberculosis (strain ATCC 25618 / H37Rv).